A 121-amino-acid polypeptide reads, in one-letter code: Basic phospholipase A2 BmTX-I (121 aa).

Disulfide bonds link C26/C114, C28/C45, C44/C95, C50/C121, C51/C88, C58/C82, and C76/C86. 3 residues coordinate Ca(2+): Y27, G29, and G31. H48 is an active-site residue. D49 is a binding site for Ca(2+). D89 is an active-site residue.

Requires Ca(2+) as cofactor. Expressed by the venom gland.

The protein resides in the secreted. It catalyses the reaction a 1,2-diacyl-sn-glycero-3-phosphocholine + H2O = a 1-acyl-sn-glycero-3-phosphocholine + a fatty acid + H(+). Its activity is regulated as follows. Inhibited by magnesium, cadmium and manganese ions. Also inhibited by crotapotin. Functionally, snake venom phospholipase A2 (PLA2) that shows enzymatic activity in the presence of a synthetic substrate. In vitro, blocks the neuromuscular transmission in young chick biventer cervicis preparations. In mice, induces myonecrosis and a systemic interleukin-6 response upon intramuscular injection. Also induces edema and exerts a strong pro-inflammatory effect. PLA2 catalyzes the calcium-dependent hydrolysis of the 2-acyl groups in 3-sn-phosphoglycerides. This chain is Basic phospholipase A2 BmTX-I, found in Bothrops moojeni (Lance-headed viper).